The sequence spans 129 residues: Small ribosomal subunit protein uS11 (129 aa).

Belongs to the universal ribosomal protein uS11 family. In terms of assembly, part of the 30S ribosomal subunit. Interacts with proteins S7 and S18. Binds to IF-3.

Located on the platform of the 30S subunit, it bridges several disparate RNA helices of the 16S rRNA. Forms part of the Shine-Dalgarno cleft in the 70S ribosome. The protein is Small ribosomal subunit protein uS11 of Rhodopseudomonas palustris (strain BisB18).